The primary structure comprises 202 residues: LexA repressor 2 (202 aa).

A DNA-binding region (H-T-H motif) is located at residues 28 to 48 (LAEISEAFGFASRSVARKHIV). Catalysis depends on for autocatalytic cleavage activity residues Ser123 and Lys160.

The protein belongs to the peptidase S24 family. Homodimer.

The enzyme catalyses Hydrolysis of Ala-|-Gly bond in repressor LexA.. Its function is as follows. Represses a number of genes involved in the response to DNA damage (SOS response), including recA and lexA. In the presence of single-stranded DNA, RecA interacts with LexA causing an autocatalytic cleavage which disrupts the DNA-binding part of LexA, leading to derepression of the SOS regulon and eventually DNA repair. This is LexA repressor 2 from Pseudomonas syringae pv. tomato (strain ATCC BAA-871 / DC3000).